The primary structure comprises 506 residues: Glycine--tRNA ligase (506 aa).

Positions 99 and 189 each coordinate substrate. ATP-binding positions include 221–223 (RNE), 231–236 (FRVREF), 305–306 (EL), and 364–367 (GVDR). 236-240 (FEQME) contacts substrate. 360–364 (EPSAG) contacts substrate.

This sequence belongs to the class-II aminoacyl-tRNA synthetase family. Homodimer.

The protein localises to the cytoplasm. The enzyme catalyses tRNA(Gly) + glycine + ATP = glycyl-tRNA(Gly) + AMP + diphosphate. Catalyzes the attachment of glycine to tRNA(Gly). The protein is Glycine--tRNA ligase of Thermus thermophilus (strain ATCC BAA-163 / DSM 7039 / HB27).